Consider the following 430-residue polypeptide: Rho GTPase-activating protein 2 (430 aa).

Residues 1–36 (MTGLVMMTKGGGCGGGGKGGRRKSTAEEEEEEEQNQ) are disordered. Positions 9 to 18 (KGGGCGGGGK) are enriched in gly residues. Residues 80-93 (IGWPTNVRHITHVT) enclose the CRIB domain. The Rho-GAP domain maps to 125 to 310 (VSAESMQCSY…TLAEREENAT (186 aa)). Positions 307–372 (ENATGSEGYS…HLSRHSTHED (66 aa)) are disordered. Low complexity predominate over residues 316–326 (SPSHSSNSQTD). Over residues 347–356 (ECGEEEEVEE) the composition is skewed to acidic residues. Residues 357–371 (VEQHQEHLSRHSTHE) are compositionally biased toward basic and acidic residues.

As to quaternary structure, homodimerizes via its Rho-GAP domain and forms a tetrameric complex (2:2) with ARAC1/ROP3, ARAC2/ROP7, ARAC4/ROP2, ARAC5/ROP4, ARAC7/ROP9 or ARAC11/ROP1.

Its function is as follows. Acts as a GTPase activator for the Rac-type GTPase by converting it to an inactive GDP-bound state. This is Rho GTPase-activating protein 2 (ROPGAP2) from Arabidopsis thaliana (Mouse-ear cress).